The primary structure comprises 425 residues: Palmitoyltransferase ZDHHC23 (425 aa).

The Cytoplasmic segment spans residues 1-81; it reads MKPVKKKKTE…RIPWLRGAKK (81 aa). Residues 82–99 traverse the membrane as a helical segment; sequence VNISIVPPLVLLPVFLHV. Residues 100–102 lie on the Lumenal side of the membrane; sequence ASW. Residues 103–125 traverse the membrane as a helical segment; it reads HFLLGVVVLTSLPMLALWYYYLT. At 126-130 the chain is on the cytoplasmic side; the sequence is HRRKE. The chain crosses the membrane as a helical span at residues 131 to 151; that stretch reads QTLFFLSLGLFSLGYMYYVFL. The Lumenal portion of the chain corresponds to 152–159; sequence REVVPQGR. A helical membrane pass occupies residues 160-180; the sequence is VGPTQLALLTCGLLLILLALY. Topologically, residues 181-292 are cytoplasmic; that stretch reads RAKKNPGYLS…NSCVGESNHQ (112 aa). The DHHC domain occupies 249–299; the sequence is DWCAKCQLVRPARAWHCRICGICVRRMDHHCVWINSCVGESNHQAFILALS. The active-site S-palmitoyl cysteine intermediate is the Cys279. The helical transmembrane segment at 293 to 313 threads the bilayer; the sequence is AFILALSIFLLTSVYGISLTL. Topologically, residues 314–343 are lumenal; the sequence is NTICRDRSLFTALFYCPGVYANYSSALSFT. Residues 344-364 traverse the membrane as a helical segment; it reads CVWYSVIITAGMAYIFLIQLI. The Cytoplasmic segment spans residues 365–425; that stretch reads NISYNVTERE…TVHTPAEDIV (61 aa). Residues 422 to 425 form an interaction with NOS1 region; that stretch reads EDIV.

Belongs to the DHHC palmitoyltransferase family. Interacts with NOS1. Expressed in the brain.

Its subcellular location is the golgi apparatus membrane. It localises to the golgi apparatus. The protein resides in the trans-Golgi network membrane. The enzyme catalyses L-cysteinyl-[protein] + hexadecanoyl-CoA = S-hexadecanoyl-L-cysteinyl-[protein] + CoA. In terms of biological role, palmitoyltransferase that could catalyze the addition of palmitate onto various protein substrates and be involved in a variety of cellular processes. Palmitoyltransferase that mediates palmitoylation of KCNMA1, regulating localization of KCNMA1 to the plasma membrane. May be involved in NOS1 regulation and targeting to the synaptic membrane. This Mus musculus (Mouse) protein is Palmitoyltransferase ZDHHC23.